Consider the following 217-residue polypeptide: Meiotic expression up-regulated protein 29 (217 aa).

An N-terminal signal peptide occupies residues 1 to 21; the sequence is MFVVKTAVLLFFALFIGNTYA. At 22 to 133 the chain is on the extracellular side; it reads YTYSLDRIQA…SGVLLHRPWK (112 aa). Residue asparagine 84 is glycosylated (N-linked (GlcNAc...) asparagine). A helical membrane pass occupies residues 134–154; that stretch reads LFSLKPFTAAFVLLLAASYLA. Over 155–217 the chain is Cytoplasmic; that stretch reads TACFRMLGYL…VPVPVLDESV (63 aa).

It is found in the membrane. This Schizosaccharomyces pombe (strain 972 / ATCC 24843) (Fission yeast) protein is Meiotic expression up-regulated protein 29 (meu29).